The chain runs to 95 residues: Large ribosomal subunit protein uL23 (95 aa).

Belongs to the universal ribosomal protein uL23 family. Part of the 50S ribosomal subunit. Contacts protein L29, and trigger factor when it is bound to the ribosome.

Its function is as follows. One of the early assembly proteins it binds 23S rRNA. One of the proteins that surrounds the polypeptide exit tunnel on the outside of the ribosome. Forms the main docking site for trigger factor binding to the ribosome. In Desulfotalea psychrophila (strain LSv54 / DSM 12343), this protein is Large ribosomal subunit protein uL23.